Consider the following 480-residue polypeptide: ATP-grasp enzyme ankG (480 aa).

The segment at 1 to 30 (MYQISLKATKSAAEPTSSTDASHDDRQVER) is disordered. Positions 21-30 (ASHDDRQVER) are enriched in basic and acidic residues.

The enzyme catalyses NK13650 D + L-aspartate + ATP = NK13650 C + AMP + diphosphate + H(+). It catalyses the reaction NK13650 B + L-aspartate + ATP = NK13650 A + AMP + diphosphate + H(+). Its pathway is secondary metabolite biosynthesis. ATP-grasp enzyme; part of the ank cluster that mediates the biosynthesis of NK13650 C, a highly modified cyclo-arginine-tyrosine dipeptide. AnkG catalyzes the last step of the pathway via amidation NK13650 D with L-Asp to produce NK13650 C. AnkG also amidates NK13650 B into NK13650 A. Within the pathway, the cyclodipeptide synthase ankA acts as the scaffold-generating enzyme and is responsible for formation of the cyclo-Arg-Tyr diketopiperazine (cRY) from L-Arg and L-Tyr. The ankA product cRY is desaturated by the cytochrome P450 monooxygenase ankB to yield a dehydro-cyclodipeptide intermediate. The FAD-dependent monooxygenase ankC then installs the m-OH, ankD catalyzes the attachment of L-homoserine, and ankE ligates citrate to the ankD product to yield NK13650 B. The O-methyltransferase ankF is responsible for methylation of the C-17 phenol group of NK13650 B to produce NK13650 D. Amidation of NK13650 D with L-Asp by ankG then leads to the production of NK13650 C, whereas amidation of NK13650 B produces NK13650 A. The sequence is that of ATP-grasp enzyme ankG from Aspergillus thermomutatus (Neosartorya pseudofischeri).